The sequence spans 186 residues: Large ribosomal subunit protein bL12c (186 aa).

The segment covering 1 to 11 has biased composition (polar residues); that stretch reads MASTLSTITLR. A disordered region spans residues 1–24; that stretch reads MASTLSTITLRSPSPSTATSTHAS. The N-terminal 53 residues, 1–53, are a transit peptide targeting the chloroplast; it reads MASTLSTITLRSPSPSTATSTHASIPFPKKTLEFPIRTPKLQNRRATFLRPLA. Residues 12 to 24 are compositionally biased toward low complexity; that stretch reads SPSPSTATSTHAS.

The protein belongs to the bacterial ribosomal protein bL12 family.

The protein localises to the plastid. It localises to the chloroplast. This chain is Large ribosomal subunit protein bL12c, found in Nicotiana sylvestris (Wood tobacco).